The sequence spans 273 residues: Ribosomal RNA small subunit methyltransferase A (273 aa).

S-adenosyl-L-methionine-binding residues include asparagine 25, leucine 27, glycine 52, glutamate 73, aspartate 99, and asparagine 118.

The protein belongs to the class I-like SAM-binding methyltransferase superfamily. rRNA adenine N(6)-methyltransferase family. RsmA subfamily.

It is found in the cytoplasm. It catalyses the reaction adenosine(1518)/adenosine(1519) in 16S rRNA + 4 S-adenosyl-L-methionine = N(6)-dimethyladenosine(1518)/N(6)-dimethyladenosine(1519) in 16S rRNA + 4 S-adenosyl-L-homocysteine + 4 H(+). Its function is as follows. Specifically dimethylates two adjacent adenosines (A1518 and A1519) in the loop of a conserved hairpin near the 3'-end of 16S rRNA in the 30S particle. May play a critical role in biogenesis of 30S subunits. This chain is Ribosomal RNA small subunit methyltransferase A, found in Novosphingobium aromaticivorans (strain ATCC 700278 / DSM 12444 / CCUG 56034 / CIP 105152 / NBRC 16084 / F199).